Reading from the N-terminus, the 368-residue chain is Cobalt-precorrin-5B C(1)-methyltransferase (368 aa).

This sequence belongs to the CbiD family.

It catalyses the reaction Co-precorrin-5B + S-adenosyl-L-methionine = Co-precorrin-6A + S-adenosyl-L-homocysteine. Its pathway is cofactor biosynthesis; adenosylcobalamin biosynthesis; cob(II)yrinate a,c-diamide from sirohydrochlorin (anaerobic route): step 6/10. Its function is as follows. Catalyzes the methylation of C-1 in cobalt-precorrin-5B to form cobalt-precorrin-6A. The protein is Cobalt-precorrin-5B C(1)-methyltransferase of Brucella anthropi (strain ATCC 49188 / DSM 6882 / CCUG 24695 / JCM 21032 / LMG 3331 / NBRC 15819 / NCTC 12168 / Alc 37) (Ochrobactrum anthropi).